Reading from the N-terminus, the 78-residue chain is Conotoxin ArMKLT2-0313 (78 aa).

The signal sequence occupies residues 1 to 22 (MKLTCVLIIAVLCLTVCQLITA). A propeptide spanning residues 23–47 (DYLRDKQKYRSVRLRDGMLNFKGSR) is cleaved from the precursor. A Pyrrolidone carboxylic acid modification is found at glutamine 48. 3 cysteine pairs are disulfide-bonded: cysteine 49-cysteine 62, cysteine 56-cysteine 67, and cysteine 61-cysteine 75.

This sequence belongs to the conotoxin O1 superfamily. Expressed by the venom duct.

Its subcellular location is the secreted. In Conus arenatus (Sand-dusted cone), this protein is Conotoxin ArMKLT2-0313.